A 117-amino-acid chain; its full sequence is Large ribosomal subunit protein bL20 (117 aa).

This sequence belongs to the bacterial ribosomal protein bL20 family.

Binds directly to 23S ribosomal RNA and is necessary for the in vitro assembly process of the 50S ribosomal subunit. It is not involved in the protein synthesizing functions of that subunit. This is Large ribosomal subunit protein bL20 from Geotalea uraniireducens (strain Rf4) (Geobacter uraniireducens).